The primary structure comprises 199 residues: NAD(P)H dehydrogenase (quinone) (199 aa).

The Flavodoxin-like domain occupies 4–190 (VLVLYYSAYG…DGARFQGKRV (187 aa)). FMN contacts are provided by residues 10–15 (SAYGHM) and 78–80 (TRY). Tyr-12 provides a ligand contact to NAD(+). A substrate-binding site is contributed by Trp-98. Residues 113 to 119 (STATQHG) and His-134 each bind FMN. A disordered region spans residues 157-185 (GGAPYGMTTTADGDGSRQPSEQELDGARF). A compositionally biased stretch (polar residues) spans 163–177 (MTTTADGDGSRQPSE).

Belongs to the WrbA family. FMN is required as a cofactor.

The enzyme catalyses a quinone + NADH + H(+) = a quinol + NAD(+). The catalysed reaction is a quinone + NADPH + H(+) = a quinol + NADP(+). This chain is NAD(P)H dehydrogenase (quinone), found in Brucella anthropi (strain ATCC 49188 / DSM 6882 / CCUG 24695 / JCM 21032 / LMG 3331 / NBRC 15819 / NCTC 12168 / Alc 37) (Ochrobactrum anthropi).